An 834-amino-acid polypeptide reads, in one-letter code: Periplasmic nitrate reductase (834 aa).

Positions 1-32 form a signal peptide, tat-type signal; the sequence is MTDMKIDRRQMLKLEAAAIAAAAAGMPSTSLA. Residues 44–100 form the 4Fe-4S Mo/W bis-MGD-type domain; it reads LKWDKAACRFCGTGCSVMVATKDNRVVATHGDIKAEVNRGLNCVKGYFLSKIMYGHD. 4 residues coordinate [4Fe-4S] cluster: C51, C54, C58, and C86. Mo-bis(molybdopterin guanine dinucleotide) is bound by residues K88, Q155, N180, C184, 217-224, 248-252, 267-269, M378, Q382, N488, 514-515, K537, D564, and 724-733; these read WGSNMAEM, STFEH, QTD, SD, and TGRVVEHWHS. W800 is a substrate binding site. N808 and K825 together coordinate Mo-bis(molybdopterin guanine dinucleotide).

It belongs to the prokaryotic molybdopterin-containing oxidoreductase family. NasA/NapA/NarB subfamily. In terms of assembly, component of the periplasmic nitrate reductase NapAB complex composed of NapA and NapB. It depends on [4Fe-4S] cluster as a cofactor. Mo-bis(molybdopterin guanine dinucleotide) is required as a cofactor. Post-translationally, predicted to be exported by the Tat system. The position of the signal peptide cleavage has not been experimentally proven.

Its subcellular location is the periplasm. The enzyme catalyses 2 Fe(II)-[cytochrome] + nitrate + 2 H(+) = 2 Fe(III)-[cytochrome] + nitrite + H2O. Its function is as follows. Catalytic subunit of the periplasmic nitrate reductase complex NapAB. Receives electrons from NapB and catalyzes the reduction of nitrate to nitrite. In Bradyrhizobium sp. (strain BTAi1 / ATCC BAA-1182), this protein is Periplasmic nitrate reductase.